The primary structure comprises 335 residues: Nucleoid-associated protein YejK (335 aa).

The protein belongs to the YejK family.

Its subcellular location is the cytoplasm. The protein localises to the nucleoid. The protein is Nucleoid-associated protein YejK of Shigella flexneri.